The primary structure comprises 385 residues: Tryptophan--tRNA ligase (385 aa).

The short motif at Pro-89–His-98 is the 'HIGH' region element. Residues Lys-268 to Ser-272 carry the 'KMSKS' region motif.

This sequence belongs to the class-I aminoacyl-tRNA synthetase family. As to quaternary structure, homodimer.

The catalysed reaction is tRNA(Trp) + L-tryptophan + ATP = L-tryptophyl-tRNA(Trp) + AMP + diphosphate + H(+). This is Tryptophan--tRNA ligase from Encephalitozoon cuniculi (strain GB-M1) (Microsporidian parasite).